We begin with the raw amino-acid sequence, 442 residues long: Glutamyl-tRNA reductase (442 aa).

Substrate-binding positions include 49–52 (TCNR), Ser-109, 114–116 (ESQ), and Gln-120. Residue Cys-50 is the Nucleophile of the active site. 189–194 (GAGAMS) is a binding site for NADP(+).

It belongs to the glutamyl-tRNA reductase family. Homodimer.

It carries out the reaction (S)-4-amino-5-oxopentanoate + tRNA(Glu) + NADP(+) = L-glutamyl-tRNA(Glu) + NADPH + H(+). Its pathway is porphyrin-containing compound metabolism; protoporphyrin-IX biosynthesis; 5-aminolevulinate from L-glutamyl-tRNA(Glu): step 1/2. Its function is as follows. Catalyzes the NADPH-dependent reduction of glutamyl-tRNA(Glu) to glutamate 1-semialdehyde (GSA). This chain is Glutamyl-tRNA reductase, found in Kineococcus radiotolerans (strain ATCC BAA-149 / DSM 14245 / SRS30216).